Reading from the N-terminus, the 196-residue chain is Putative NADH dehydrogenase/NAD(P)H nitroreductase SGR_2476 (196 aa).

This sequence belongs to the nitroreductase family. HadB/RutE subfamily. The cofactor is FMN.

The chain is Putative NADH dehydrogenase/NAD(P)H nitroreductase SGR_2476 from Streptomyces griseus subsp. griseus (strain JCM 4626 / CBS 651.72 / NBRC 13350 / KCC S-0626 / ISP 5235).